Here is a 161-residue protein sequence, read N- to C-terminus: MAELYIDADACPVKAEAERVAVRHGARMYLVSNGGIRPPAHPLVESVFVPEGPDAADKWIADRAGTGDVVVTSDIPLAAKAVAAGALVVKPNGETLTTANIGNALATRDLMADLRSADPFRQGGGRPFSRADRSRFLDALERAMRKAAEAARDAGQDEAGT.

It belongs to the UPF0178 family.

In Cereibacter sphaeroides (strain ATCC 17025 / ATH 2.4.3) (Rhodobacter sphaeroides), this protein is UPF0178 protein Rsph17025_3122.